The primary structure comprises 510 residues: Glycerol kinase (510 aa).

ADP is bound at residue Thr13. Thr13 and Thr14 together coordinate ATP. Thr13 lines the sn-glycerol 3-phosphate pocket. Position 17 (Arg17) interacts with ADP. Positions 83, 84, 135, and 255 each coordinate sn-glycerol 3-phosphate. Positions 83, 84, 135, 255, and 256 each coordinate glycerol. ADP-binding residues include Thr277, Gly321, Gly421, and Asn425. ATP is bound by residues Thr277, Gly321, and Gly421.

The protein belongs to the FGGY kinase family.

It catalyses the reaction glycerol + ATP = sn-glycerol 3-phosphate + ADP + H(+). It participates in polyol metabolism; glycerol degradation via glycerol kinase pathway; sn-glycerol 3-phosphate from glycerol: step 1/1. Functionally, key enzyme in the regulation of glycerol uptake and metabolism. Catalyzes the phosphorylation of glycerol to yield sn-glycerol 3-phosphate. The chain is Glycerol kinase from Haloarcula marismortui (strain ATCC 43049 / DSM 3752 / JCM 8966 / VKM B-1809) (Halobacterium marismortui).